The primary structure comprises 102 residues: Integration host factor subunit alpha (102 aa).

The interval 49 to 71 is disordered; sequence FGNFQLRTKPQRPGRNPKTGEEI.

The protein belongs to the bacterial histone-like protein family. As to quaternary structure, heterodimer of an alpha and a beta chain.

Functionally, this protein is one of the two subunits of integration host factor, a specific DNA-binding protein that functions in genetic recombination as well as in transcriptional and translational control. This chain is Integration host factor subunit alpha, found in Nitrosomonas eutropha (strain DSM 101675 / C91 / Nm57).